A 224-amino-acid chain; its full sequence is Orotate phosphoribosyltransferase (224 aa).

K29 lines the 5-phospho-alpha-D-ribose 1-diphosphate pocket. 37–38 (FF) contacts orotate. 5-phospho-alpha-D-ribose 1-diphosphate is bound by residues 75–76 (YK), R105, K106, K109, H111, and 130–138 (DDVITAGTS). Residues T134 and R162 each contribute to the orotate site.

The protein belongs to the purine/pyrimidine phosphoribosyltransferase family. PyrE subfamily. As to quaternary structure, homodimer. Mg(2+) serves as cofactor.

The catalysed reaction is orotidine 5'-phosphate + diphosphate = orotate + 5-phospho-alpha-D-ribose 1-diphosphate. It participates in pyrimidine metabolism; UMP biosynthesis via de novo pathway; UMP from orotate: step 1/2. Its function is as follows. Catalyzes the transfer of a ribosyl phosphate group from 5-phosphoribose 1-diphosphate to orotate, leading to the formation of orotidine monophosphate (OMP). The protein is Orotate phosphoribosyltransferase of Bordetella bronchiseptica (strain ATCC BAA-588 / NCTC 13252 / RB50) (Alcaligenes bronchisepticus).